Consider the following 613-residue polypeptide: Zinc metalloproteinase-disintegrin-like VMP-III (613 aa).

The signal sequence occupies residues 1-20 (MIQVLLVTLCLAAFPYQGSS). A propeptide spanning residues 21–190 (IILDSGNVND…KKASQLVVTP (170 aa)) is cleaved from the precursor. A Peptidase M12B domain is found at 200–396 (KYIELVIVAD…NRPPCILNKP (197 aa)). Glu-203 serves as a coordination point for Ca(2+). N-linked (GlcNAc...) asparagine glycosylation occurs at Asn-219. Asp-287 provides a ligand contact to Ca(2+). Cystine bridges form between Cys-311–Cys-391, Cys-351–Cys-375, and Cys-353–Cys-358. Position 336 (His-336) interacts with Zn(2+). Glu-337 is an active-site residue. His-340 and His-346 together coordinate Zn(2+). Ca(2+) contacts are provided by Cys-391, Asn-394, Val-406, Asn-409, Phe-411, Glu-413, Glu-416, and Asp-419. The Disintegrin domain occupies 404–490 (PPVCGNYFVE…ECPTDDFQRN (87 aa)). 14 cysteine pairs are disulfide-bonded: Cys-407–Cys-436, Cys-418–Cys-431, Cys-420–Cys-426, Cys-430–Cys-453, Cys-444–Cys-450, Cys-449–Cys-475, Cys-462–Cys-482, Cys-469–Cys-501, Cys-494–Cys-506, Cys-513–Cys-563, Cys-528–Cys-574, Cys-541–Cys-551, Cys-558–Cys-600, and Cys-594–Cys-606. Residues 468 to 470 (ECD) carry the D/ECD-tripeptide motif. Asn-503 carries N-linked (GlcNAc...) asparagine glycosylation.

This sequence belongs to the venom metalloproteinase (M12B) family. P-III subfamily. P-IIIa sub-subfamily. Monomer. Zn(2+) is required as a cofactor. In terms of tissue distribution, expressed by the venom gland.

The protein resides in the secreted. In terms of biological role, snake venom metalloproteinase that impairs hemostasis in the envenomed animal. The polypeptide is Zinc metalloproteinase-disintegrin-like VMP-III (Agkistrodon piscivorus leucostoma (Western cottonmouth)).